The sequence spans 739 residues: Phosphoribosylformylglycinamidine synthase subunit PurL (739 aa).

His-54 is an active-site residue. Residues Tyr-57 and Lys-96 each contribute to the ATP site. Position 98 (Glu-98) interacts with Mg(2+). Substrate contacts are provided by residues 99-102 (SHNH) and Arg-121. His-100 acts as the Proton acceptor in catalysis. Asp-122 contributes to the Mg(2+) binding site. Residue Gln-245 coordinates substrate. A Mg(2+)-binding site is contributed by Asp-275. Residue 319-321 (ESQ) coordinates substrate. Residues Asp-504 and Gly-541 each coordinate ATP. Asn-542 contributes to the Mg(2+) binding site. Ser-544 contacts substrate.

The protein belongs to the FGAMS family. In terms of assembly, monomer. Part of the FGAM synthase complex composed of 1 PurL, 1 PurQ and 2 PurS subunits.

Its subcellular location is the cytoplasm. The catalysed reaction is N(2)-formyl-N(1)-(5-phospho-beta-D-ribosyl)glycinamide + L-glutamine + ATP + H2O = 2-formamido-N(1)-(5-O-phospho-beta-D-ribosyl)acetamidine + L-glutamate + ADP + phosphate + H(+). It participates in purine metabolism; IMP biosynthesis via de novo pathway; 5-amino-1-(5-phospho-D-ribosyl)imidazole from N(2)-formyl-N(1)-(5-phospho-D-ribosyl)glycinamide: step 1/2. Part of the phosphoribosylformylglycinamidine synthase complex involved in the purines biosynthetic pathway. Catalyzes the ATP-dependent conversion of formylglycinamide ribonucleotide (FGAR) and glutamine to yield formylglycinamidine ribonucleotide (FGAM) and glutamate. The FGAM synthase complex is composed of three subunits. PurQ produces an ammonia molecule by converting glutamine to glutamate. PurL transfers the ammonia molecule to FGAR to form FGAM in an ATP-dependent manner. PurS interacts with PurQ and PurL and is thought to assist in the transfer of the ammonia molecule from PurQ to PurL. This Lactococcus lactis subsp. lactis (strain IL1403) (Streptococcus lactis) protein is Phosphoribosylformylglycinamidine synthase subunit PurL.